Here is a 167-residue protein sequence, read N- to C-terminus: Ion-translocating oxidoreductase complex subunit B (167 aa).

Residues Met1 to Ala22 form a hydrophobic region. The 4Fe-4S domain maps to Gln28 to Ile87. Cys45, Cys48, Cys53, Cys70, Cys113, Cys116, Cys119, Cys123, Cys143, Cys146, Cys149, and Cys153 together coordinate [4Fe-4S] cluster. 4Fe-4S ferredoxin-type domains are found at residues Asn104–Asn133 and Phe134–Glu163.

Belongs to the 4Fe4S bacterial-type ferredoxin family. RnfB subfamily. The complex is composed of six subunits: RnfA, RnfB, RnfC, RnfD, RnfE and RnfG. [4Fe-4S] cluster is required as a cofactor.

It localises to the cell inner membrane. Part of a membrane-bound complex that couples electron transfer with translocation of ions across the membrane. This Buchnera aphidicola subsp. Acyrthosiphon pisum (strain Tuc7) protein is Ion-translocating oxidoreductase complex subunit B.